The following is a 404-amino-acid chain: MGEHPSPGPAVAACAEAERIEELEPEAEERLPAAPEDHWKVLFEKFDPGSTGYISTGKFRSLLESHSSKLDPHKKEVLLALADSHADGQICYQDFVNLMSNKRSNSFRQAILQGNRRLSSKALLEEKGLSLSQRLIRHVAYETLPREIDRKWYYDSYTCCPPPWFMITITLLEVALFLYNGVLLDQFVLQVTHPRYLKNSLVYHPQLRAQAWRYVTYIFMHAGVEQLGLNVALQLLVGVPLEMVHGATRIGLVYVAGVVAGSLAVSVADMTAPVVGSSGGVYALVSAHLANIVMNWSGMKCQFKLLRMAVALICMSMEFGRAVWLRFHPSAYPPCPHPSFVAHLGGVAVGITLGVVVLRNYEQRLQDQSLWWIFVTMYTIFVLFAVFWNIFAYTLLDLKLPPAP.

2 EF-hand domains span residues 34-69 (APEDHWKVLFEKFDPGSTGYISTGKFRSLLESHSSK) and 70-105 (LDPHKKEVLLALADSHADGQICYQDFVNLMSNKRSN). The next 7 helical transmembrane spans lie at 164–184 (WFMITITLLEVALFLYNGVLL), 227–247 (LGLNVALQLLVGVPLEMVHGA), 250–270 (IGLVYVAGVVAGSLAVSVADM), 274–294 (VVGSSGGVYALVSAHLANIVM), 305–324 (LLRMAVALICMSMEFGRAVW), 338–358 (PSFVAHLGGVAVGITLGVVVL), and 371–391 (WWIFVTMYTIFVLFAVFWNIF). The Nucleophile role is filled by Ser-278. Residue His-343 is part of the active site.

It belongs to the peptidase S54 family.

The protein localises to the membrane. The enzyme catalyses Cleaves type-1 transmembrane domains using a catalytic dyad composed of serine and histidine that are contributed by different transmembrane domains.. May be involved in regulated intramembrane proteolysis and the subsequent release of functional polypeptides from their membrane anchors. The polypeptide is Rhomboid-related protein 3 (Rhbdl3) (Mus musculus (Mouse)).